Reading from the N-terminus, the 347-residue chain is UPF0284 protein YN1551_0030 (347 aa).

It belongs to the UPF0284 family.

This Saccharolobus islandicus (strain Y.N.15.51 / Yellowstone #2) (Sulfolobus islandicus) protein is UPF0284 protein YN1551_0030.